We begin with the raw amino-acid sequence, 99 residues long: A-type ATP synthase subunit F (99 aa).

The protein belongs to the V-ATPase F subunit family. As to quaternary structure, has multiple subunits with at least A(3), B(3), C, D, E, F, H, I and proteolipid K(x).

The protein localises to the cell membrane. Functionally, component of the A-type ATP synthase that produces ATP from ADP in the presence of a proton gradient across the membrane. The sequence is that of A-type ATP synthase subunit F from Methanococcus maripaludis (strain C6 / ATCC BAA-1332).